Reading from the N-terminus, the 439-residue chain is Cysteine--tRNA ligase (439 aa).

Residue Cys-26 participates in Zn(2+) binding. The 'HIGH' region signature appears at 28–38; it reads PTVYNHVHIGN. Zn(2+) is bound by residues Cys-206, His-231, and Glu-235. Residues 263-267 carry the 'KMSKS' region motif; sequence KMSKS. Lys-266 contributes to the ATP binding site.

It belongs to the class-I aminoacyl-tRNA synthetase family. In terms of assembly, monomer. Zn(2+) is required as a cofactor.

The protein localises to the cytoplasm. It catalyses the reaction tRNA(Cys) + L-cysteine + ATP = L-cysteinyl-tRNA(Cys) + AMP + diphosphate. The sequence is that of Cysteine--tRNA ligase from Malacoplasma penetrans (strain HF-2) (Mycoplasma penetrans).